A 170-amino-acid polypeptide reads, in one-letter code: Small ribosomal subunit protein uS3mA (170 aa).

The N-terminal 30 residues, 1 to 30 (MAAPVMSALGRLQGLIRTERSLLTHVQSRC), are a transit peptide targeting the mitochondrion.

This sequence belongs to the universal ribosomal protein uS3 family. Component of the mitochondrial ribosome small subunit (28S) which comprises a 12S rRNA and about 30 distinct proteins.

It is found in the mitochondrion. This Xenopus laevis (African clawed frog) protein is Small ribosomal subunit protein uS3mA (mrps24-a).